Consider the following 349-residue polypeptide: Meiotic recombination protein DMC1 homolog (349 aa).

138–145 lines the ATP pocket; that stretch reads GEFRSGKT. Arg-240 contacts dsDNA. SsDNA-binding residues include Arg-240, Phe-243, Arg-246, Arg-252, and Arg-320. The dsDNA site is built by Arg-246 and Arg-252.

The protein belongs to the RecA family. DMC1 subfamily. Double stacked ring-shaped homooctamer.

It localises to the nucleus. May participate in meiotic recombination. This Lilium longiflorum (Trumpet lily) protein is Meiotic recombination protein DMC1 homolog (LIM15).